The sequence spans 414 residues: xyloglucan O-acetyltransferase 2 (414 aa).

Residues 1–26 (MKSSSSIFRETSEKKSERWMMMNIGR) are Cytoplasmic-facing. The helical; Signal-anchor for type II membrane protein transmembrane segment at 27–47 (FSPFFLSSFCITLFFTGFFVY) threads the bilayer. The Lumenal portion of the chain corresponds to 48–414 (QNPFKSIADQ…FLMAIIRQLR (367 aa)). 4 disulfide bridges follow: Cys-70–Cys-120, Cys-91–Cys-156, Cys-100–Cys-394, and Cys-317–Cys-390. Residue Asn-88 is glycosylated (N-linked (GlcNAc...) asparagine). Positions 143–145 (GDS) match the GDS motif motif. Ser-145 functions as the Nucleophile in the catalytic mechanism. 3 N-linked (GlcNAc...) asparagine glycosylation sites follow: Asn-205, Asn-263, and Asn-308. The active-site Proton donor is Asp-389. A DXXH motif motif is present at residues 389–392 (DCVH). His-392 serves as the catalytic Proton acceptor.

Belongs to the PC-esterase family. TBL subfamily.

It is found in the membrane. In terms of biological role, xyloglucan acetyltransferase that catalyzes the acetylation of fucosylated Gal residues on xyloglucan side chains. Predominantly catalyze 6-O-monoacetylation of Gal residues in the Fuc-Gal-Xyl trisaccharide side chains of xyloglucan oligomers. Involved in xyloglucan specific O-acetylation in seeds. This chain is xyloglucan O-acetyltransferase 2, found in Arabidopsis thaliana (Mouse-ear cress).